The primary structure comprises 778 residues: Arf-GAP with coiled-coil, ANK repeat and PH domain-containing protein 2 (778 aa).

In terms of domain architecture, BAR spans 1–226 (MKMTVDFEEC…MKDLGAQLDR (226 aa)). The PH domain maps to 266–361 (GIVMEGYLFK…WIKAVQTSIA (96 aa)). Positions 371–391 (SEKLDKKSSPSTGSLDSGNES) are disordered. A compositionally biased stretch (polar residues) spans 379–388 (SPSTGSLDSG). Phosphoserine occurs at positions 384 and 387. The 122-residue stretch at 399–520 (ESALQRVQCI…KFVDKYSISL (122 aa)) folds into the Arf-GAP domain. Residues 414 to 437 (CCDCGLADPRWASINLGITLCIEC) form a C4-type zinc finger. Serine 521 carries the post-translational modification Phosphoserine. The segment at 540–599 (SISKFGPGDQVRASAQSSVRSNDSGIQQSSDDGRESLPSTVSANSLYEPEGERQDSSMFL) is disordered. Residues 552–569 (ASAQSSVRSNDSGIQQSS) show a composition bias toward polar residues. Residues serine 581 and serine 584 each carry the phosphoserine modification. ANK repeat units follow at residues 640-669 (NKAT…NVNQ), 673-702 (QGRG…NQHA), and 706-735 (EGKD…NEEM). Tyrosine 742 is subject to Phosphotyrosine. Serine 775 is modified (phosphoserine).

Interacts (via KANK domains) with RAB35 (GTP-bound form); the interaction is direct and probably recruits ACAP2 to membranes including plasma membrane. Interacts with MICALL1; the interaction is indirect through RAB35. As to expression, widely expressed. Highest level in lung.

It is found in the cell membrane. Its subcellular location is the endosome membrane. Its activity is regulated as follows. GAP activity stimulated by phosphatidylinositol 4,5-bisphosphate (PIP2) and phosphatidic acid. GTPase-activating protein (GAP) for ADP ribosylation factor 6 (ARF6). Doesn't show GAP activity for RAB35. The polypeptide is Arf-GAP with coiled-coil, ANK repeat and PH domain-containing protein 2 (ACAP2) (Homo sapiens (Human)).